The following is a 165-amino-acid chain: Ribosome maturation factor RimM (165 aa).

Residues 89–161 (EADTHYVVDL…KIVIKPVRQW (73 aa)) form the PRC barrel domain.

The protein belongs to the RimM family. As to quaternary structure, binds ribosomal protein uS19.

The protein resides in the cytoplasm. An accessory protein needed during the final step in the assembly of 30S ribosomal subunit, possibly for assembly of the head region. Essential for efficient processing of 16S rRNA. May be needed both before and after RbfA during the maturation of 16S rRNA. It has affinity for free ribosomal 30S subunits but not for 70S ribosomes. The sequence is that of Ribosome maturation factor RimM from Clostridium botulinum (strain Eklund 17B / Type B).